Here is a 518-residue protein sequence, read N- to C-terminus: MDESGRQRPASHVAADISPQGAHRRSFKAWLASYIHSLSRRASGRPSGPSPRDGAVSGARPGSRRRSSFRERLRAGLSRWRVSRSSRRRSSPEAPGPAAKLRRPPLRRSETAMTSPPSPPSHILSLARIHKLCIPVFAVNPALRYTTLEIPGARSFGGSGGYGEVQLIREHKLAVKTIREKEWFAVELVATLLVGECALRGGRTHDIRGFITPLGFSLQQRQIVFPAYDMDLGKYIGQLASLRATTPSVATALHHCFTDLARAVVFLNTRCGISHLDIKCANVLVMLRSDAVSLRPAVLADFSLVTLNSNSTISRGQFCLQEPDLESPRGFGMPAALTTANFHTLVGHGYNQPPELSVKYLNNERAEFNNRPLKHDVGLAVDLYALGQTLLELLVSVYVAPSLGVPVTRVPGYQYFNNQLSPDFAVALLAYRCVLHPALFVNSAETNTHGLAYDVPEGIRRHLRNPKIRRAFTEQCINYQRTHKAVLSSVSLPPELRPLLVLVSRLCHANPAARHSLS.

2 disordered regions span residues 1 to 22 and 39 to 120; these read MDESGRQRPASHVAADISPQGA and SRRA…PSPP. A compositionally biased stretch (low complexity) spans 44-61; the sequence is GRPSGPSPRDGAVSGARP. A Protein kinase domain is found at 151-518; that stretch reads PGARSFGGSG…ANPAARHSLS (368 aa). ATP is bound by residues 157-165 and Lys-176; that span reads GGSGGYGEV. Asp-277 (proton acceptor) is an active-site residue.

The protein belongs to the protein kinase superfamily. Ser/Thr protein kinase family. Post-translationally, autophosphorylated.

It is found in the virion tegument. The protein localises to the host nucleus. It catalyses the reaction L-seryl-[protein] + ATP = O-phospho-L-seryl-[protein] + ADP + H(+). It carries out the reaction L-threonyl-[protein] + ATP = O-phospho-L-threonyl-[protein] + ADP + H(+). In terms of biological role, multifunctional serine/threonine kinase that plays a role in several processes including egress of virus particles from the nucleus, modulation of the actin cytoskeleton and regulation of viral and cellular gene expression. Regulates the nuclear localization of viral envelopment factors UL34 and UL31, by phosphorylating the US3 kinase, indicating a role in nuclear egress. Disrupts host nuclear lamins, including LMNA and LMNB1. Phosphorylates the viral Fc receptor composed of glycoproteins E (gE) and I (gI). Phosphorylation of glycoprotein E (gE) by UL13 alters its subcellular localization, from the host early endosome to the plasma membrane. Participates in the transcriptional regulation of cellular and viral mRNAs mainly by phosphorylating the viral transcriptional regulator ICP22. Additional substrates have been identified, including UL41, UL49 or host EF1D. The sequence is that of Serine/threonine-protein kinase UL13 from Homo sapiens (Human).